Consider the following 449-residue polypeptide: Glucose-6-phosphate isomerase (449 aa).

The Proton donor role is filled by E290. Catalysis depends on residues H311 and K425.

The protein belongs to the GPI family.

Its subcellular location is the cytoplasm. It carries out the reaction alpha-D-glucose 6-phosphate = beta-D-fructose 6-phosphate. It functions in the pathway carbohydrate biosynthesis; gluconeogenesis. The protein operates within carbohydrate degradation; glycolysis; D-glyceraldehyde 3-phosphate and glycerone phosphate from D-glucose: step 2/4. Catalyzes the reversible isomerization of glucose-6-phosphate to fructose-6-phosphate. This is Glucose-6-phosphate isomerase from Exiguobacterium sibiricum (strain DSM 17290 / CCUG 55495 / CIP 109462 / JCM 13490 / 255-15).